A 201-amino-acid polypeptide reads, in one-letter code: Small ribosomal subunit protein uS4c (201 aa).

Residues 17–36 (ALPGLTRKTPKSGSNLKKKF) are disordered. An S4 RNA-binding domain is found at 89–157 (MRLDNILFRL…VQNYIASSDP (69 aa)).

The protein belongs to the universal ribosomal protein uS4 family. In terms of assembly, part of the 30S ribosomal subunit. Contacts protein S5. The interaction surface between S4 and S5 is involved in control of translational fidelity.

It localises to the plastid. The protein localises to the chloroplast. One of the primary rRNA binding proteins, it binds directly to 16S rRNA where it nucleates assembly of the body of the 30S subunit. Functionally, with S5 and S12 plays an important role in translational accuracy. This Agrostis stolonifera (Creeping bentgrass) protein is Small ribosomal subunit protein uS4c (rps4).